The primary structure comprises 182 residues: Homeobox protein pnx (182 aa).

Residues 1 to 34 (MHEETSNSTLQGKTSFSIADILDPAKFNGTRETR) form an important for interaction with tle3a region. The disordered stretch occupies residues 24–63 (PAKFNGTRETREISNNRESPKTTSPTQDPSAPNIANASAA). Positions 29-43 (GTRETREISNNRESP) are enriched in basic and acidic residues. Over residues 52–63 (PSAPNIANASAA) the composition is skewed to low complexity. A DNA-binding region (homeobox) is located at residues 67 to 126 (SKRIRTAFTLDQLRILERSFQSSHYLSVFERHCIASALGLSETQVKIWFQNRRTKWKKEL).

This sequence belongs to the NK-1 homeobox family. Interacts with tle3a.

It is found in the nucleus. In terms of biological role, transcriptional repressor. Activity as a repressor is enhanced by binding to the corepressor tle3a. This is Homeobox protein pnx from Danio rerio (Zebrafish).